We begin with the raw amino-acid sequence, 265 residues long: Imidazole glycerol phosphate synthase subunit HisF (265 aa).

Catalysis depends on residues Asp-17 and Asp-136.

It belongs to the HisA/HisF family. In terms of assembly, heterodimer of HisH and HisF.

It is found in the cytoplasm. It carries out the reaction 5-[(5-phospho-1-deoxy-D-ribulos-1-ylimino)methylamino]-1-(5-phospho-beta-D-ribosyl)imidazole-4-carboxamide + L-glutamine = D-erythro-1-(imidazol-4-yl)glycerol 3-phosphate + 5-amino-1-(5-phospho-beta-D-ribosyl)imidazole-4-carboxamide + L-glutamate + H(+). It participates in amino-acid biosynthesis; L-histidine biosynthesis; L-histidine from 5-phospho-alpha-D-ribose 1-diphosphate: step 5/9. In terms of biological role, IGPS catalyzes the conversion of PRFAR and glutamine to IGP, AICAR and glutamate. The HisF subunit catalyzes the cyclization activity that produces IGP and AICAR from PRFAR using the ammonia provided by the HisH subunit. The chain is Imidazole glycerol phosphate synthase subunit HisF from Mycolicibacterium paratuberculosis (strain ATCC BAA-968 / K-10) (Mycobacterium paratuberculosis).